The primary structure comprises 92 residues: Elongation factor 1-beta (92 aa).

This sequence belongs to the EF-1-beta/EF-1-delta family.

Promotes the exchange of GDP for GTP in EF-1-alpha/GDP, thus allowing the regeneration of EF-1-alpha/GTP that could then be used to form the ternary complex EF-1-alpha/GTP/AAtRNA. The polypeptide is Elongation factor 1-beta (Hyperthermus butylicus (strain DSM 5456 / JCM 9403 / PLM1-5)).